A 231-amino-acid polypeptide reads, in one-letter code: Two-component response regulator ARR3 (231 aa).

The Response regulatory domain maps to 34 to 161; it reads HVLAVDDSLV…DVKRLRSYLT (128 aa). A 4-aspartylphosphate modification is found at aspartate 94. The disordered stretch occupies residues 170 to 231; sequence GNKRKLTTPP…DSPMRSPGLA (62 aa). The span at 185-199 shows a compositional bias: low complexity; that stretch reads SATSSMESSDSTVES. The span at 210–221 shows a compositional bias: polar residues; that stretch reads LTMSPESATSLV.

It belongs to the ARR family. Type-A subfamily. In terms of processing, two-component system major event consists of a His-to-Asp phosphorelay between a sensor histidine kinase (HK) and a response regulator (RR). In plants, the His-to-Asp phosphorelay involves an additional intermediate named Histidine-containing phosphotransfer protein (HPt). This multistep phosphorelay consists of a His-Asp-His-Asp sequential transfer of a phosphate group between first a His and an Asp of the HK protein, followed by the transfer to a conserved His of the HPt protein and finally the transfer to an Asp in the receiver domain of the RR protein. Predominantly expressed in roots.

The protein localises to the nucleus. In terms of biological role, functions as a response regulator involved in His-to-Asp phosphorelay signal transduction system. Phosphorylation of the Asp residue in the receiver domain activates the ability of the protein to promote the transcription of target genes. Type-A response regulators seem to act as negative regulators of the cytokinin signaling. In Arabidopsis thaliana (Mouse-ear cress), this protein is Two-component response regulator ARR3 (ARR3).